Here is a 772-residue protein sequence, read N- to C-terminus: Acetamidase regulatory protein (772 aa).

Residues 1 to 16 (MSSTAQKNSLSPTGNG) show a composition bias toward polar residues. Residues 1 to 23 (MSSTAQKNSLSPTGNGVTKRKSG) are disordered. The zn(2)-C6 fungal-type DNA-binding region spans 26 to 59 (ACVHCHRRKVRCDARIVGLPCSNCRSSGKTDCRI). Disordered regions lie at residues 78-99 (RCRPPSTSEHVPEASPPSTISE), 114-148 (AAAPPASVAPNVQSKAQHLHSNSYSQTSPQAQECH), and 627-690 (ATSE…QTAV). Residues 114–123 (AAAPPASVAP) show a composition bias toward low complexity. Composition is skewed to polar residues over residues 124–144 (NVQSKAQHLHSNSYSQTSPQA) and 634–658 (PFSSTQDQPQAQALDQNKNQHQHSS). The segment covering 671 to 686 (LLPSYDSPTPDSTSLP) has biased composition (low complexity).

The protein localises to the nucleus. In terms of biological role, positively regulates the expression of genes involved in the catabolism of certain amides, omega amino acids, and lactams. The polypeptide is Acetamidase regulatory protein (amdR) (Aspergillus fumigatus (strain ATCC MYA-4609 / CBS 101355 / FGSC A1100 / Af293) (Neosartorya fumigata)).